Consider the following 317-residue polypeptide: Inactive serine protease 45 (317 aa).

Residues 1 to 35 (MATSLRGLDAGPGSLRRWILICFAALLLLPPRPNL) form the signal peptide. N-linked (GlcNAc...) asparagine glycosylation is present at Asn-40. One can recognise a Peptidase S1 domain in the interval 44–291 (PVCGTPWWPD…YTIWIKDQVS (248 aa)). Cys-75 and Cys-91 are oxidised to a cystine. N-linked (GlcNAc...) asparagine glycosylation occurs at Asn-110. Cystine bridges form between Cys-172–Cys-249, Cys-207–Cys-230, and Cys-239–Cys-267. N-linked (GlcNAc...) asparagine glycosylation is present at Asn-272.

It belongs to the peptidase S1 family.

It is found in the secreted. This chain is Inactive serine protease 45, found in Mus musculus (Mouse).